Reading from the N-terminus, the 341-residue chain is Porin-like protein L (341 aa).

The signal sequence occupies residues 1-21 (MNKKLIALAVAAASISSVATA).

The protein belongs to the Gram-negative porin family. As to quaternary structure, homotrimer.

The protein localises to the cell outer membrane. Functionally, forms pores that allow passive diffusion of small molecules across the outer membrane. The chain is Porin-like protein L (ompL) from Photobacterium profundum (strain SS9).